Reading from the N-terminus, the 141-residue chain is Hemoglobin subunit alpha-D (141 aa).

Positions 1–141 constitute a Globin domain; that stretch reads MLTEDEKQLI…VSAVLAEKYR (141 aa). Residues H58 and H87 each coordinate heme b.

The protein belongs to the globin family. In terms of assembly, heterotetramer of two alpha-D chains and two beta chains. In terms of tissue distribution, red blood cells.

Its function is as follows. Involved in oxygen transport from the lung to the various peripheral tissues. The sequence is that of Hemoglobin subunit alpha-D (HBAD) from Chelonoidis carbonarius (Red-footed tortoise).